Here is a 265-residue protein sequence, read N- to C-terminus: uncharacterized protein (265 aa).

The tract at residues 1–160 is disordered; sequence MDKSKNLFDL…STEPVVAAPV (160 aa). A compositionally biased stretch (low complexity) spans 28–42; sequence AAAAPVAAKKPVAPK. Basic and acidic residues-rich tracts occupy residues 73-85 and 102-119; these read SEER…DSKS and RQFD…ENKK.

The protein belongs to the SERBP1-HABP4 family.

Its function is as follows. Ribosome-binding protein that acts as a regulator of mRNA translation by promoting ribosome inactivation. This is an uncharacterized protein from Dictyostelium discoideum (Social amoeba).